Here is a 476-residue protein sequence, read N- to C-terminus: Bifunctional protein HldE (476 aa).

The segment at 1–318 (MLSKKPNILV…EYESSLHKSN (318 aa)) is ribokinase. 195 to 198 (NKKE) serves as a coordination point for ATP. The active site involves D263. Positions 345–476 (FTNGCFDILH…RIQENEKCNN (132 aa)) are cytidylyltransferase.

This sequence in the N-terminal section; belongs to the carbohydrate kinase PfkB family. The protein in the C-terminal section; belongs to the cytidylyltransferase family. As to quaternary structure, homodimer.

It carries out the reaction D-glycero-beta-D-manno-heptose 7-phosphate + ATP = D-glycero-beta-D-manno-heptose 1,7-bisphosphate + ADP + H(+). The enzyme catalyses D-glycero-beta-D-manno-heptose 1-phosphate + ATP + H(+) = ADP-D-glycero-beta-D-manno-heptose + diphosphate. Its pathway is nucleotide-sugar biosynthesis; ADP-L-glycero-beta-D-manno-heptose biosynthesis; ADP-L-glycero-beta-D-manno-heptose from D-glycero-beta-D-manno-heptose 7-phosphate: step 1/4. The protein operates within nucleotide-sugar biosynthesis; ADP-L-glycero-beta-D-manno-heptose biosynthesis; ADP-L-glycero-beta-D-manno-heptose from D-glycero-beta-D-manno-heptose 7-phosphate: step 3/4. Its function is as follows. Catalyzes the phosphorylation of D-glycero-D-manno-heptose 7-phosphate at the C-1 position to selectively form D-glycero-beta-D-manno-heptose-1,7-bisphosphate. In terms of biological role, catalyzes the ADP transfer from ATP to D-glycero-beta-D-manno-heptose 1-phosphate, yielding ADP-D-glycero-beta-D-manno-heptose. The sequence is that of Bifunctional protein HldE from Aliarcobacter butzleri (strain RM4018) (Arcobacter butzleri).